Here is a 340-residue protein sequence, read N- to C-terminus: UDP-3-O-acylglucosamine N-acyltransferase (340 aa).

His-238 functions as the Proton acceptor in the catalytic mechanism.

The protein belongs to the transferase hexapeptide repeat family. LpxD subfamily. Homotrimer.

It carries out the reaction a UDP-3-O-[(3R)-3-hydroxyacyl]-alpha-D-glucosamine + a (3R)-hydroxyacyl-[ACP] = a UDP-2-N,3-O-bis[(3R)-3-hydroxyacyl]-alpha-D-glucosamine + holo-[ACP] + H(+). It functions in the pathway bacterial outer membrane biogenesis; LPS lipid A biosynthesis. Functionally, catalyzes the N-acylation of UDP-3-O-acylglucosamine using 3-hydroxyacyl-ACP as the acyl donor. Is involved in the biosynthesis of lipid A, a phosphorylated glycolipid that anchors the lipopolysaccharide to the outer membrane of the cell. The protein is UDP-3-O-acylglucosamine N-acyltransferase of Psychromonas ingrahamii (strain DSM 17664 / CCUG 51855 / 37).